A 251-amino-acid chain; its full sequence is Phosphoribosylaminoimidazole-succinocarboxamide synthase (251 aa).

This sequence belongs to the SAICAR synthetase family.

It carries out the reaction 5-amino-1-(5-phospho-D-ribosyl)imidazole-4-carboxylate + L-aspartate + ATP = (2S)-2-[5-amino-1-(5-phospho-beta-D-ribosyl)imidazole-4-carboxamido]succinate + ADP + phosphate + 2 H(+). Its pathway is purine metabolism; IMP biosynthesis via de novo pathway; 5-amino-1-(5-phospho-D-ribosyl)imidazole-4-carboxamide from 5-amino-1-(5-phospho-D-ribosyl)imidazole-4-carboxylate: step 1/2. This is Phosphoribosylaminoimidazole-succinocarboxamide synthase from Ruegeria pomeroyi (strain ATCC 700808 / DSM 15171 / DSS-3) (Silicibacter pomeroyi).